A 421-amino-acid chain; its full sequence is NADP(+)-dependent glutamate dehydrogenase (421 aa).

Positions 70 and 94 each coordinate substrate. Residue Lys-106 is the Proton donor of the active site. NADP(+) is bound by residues Thr-190 and Asn-221. Ser-354 contacts substrate.

The protein belongs to the Glu/Leu/Phe/Val dehydrogenases family. In terms of assembly, homohexamer.

The catalysed reaction is L-glutamate + NADP(+) + H2O = 2-oxoglutarate + NH4(+) + NADPH + H(+). Is not regulated allosterically. Activity is inhibited in the presence of high ionic strength; the inhibitory effect of KCl is slightly higher than that of NaCl. Catalyzes the reversible oxidative deamination of L-glutamate to 2-oxoglutarate and ammonia, thereby playing a key role at the intersection of the carbon and nitrogen metabolic pathways. Shows a high preference for NADP(+)/NADPH as the acceptor/donor over NAD(+)/NADH. May function in vivo in the synthetic direction. Also catalyzes at very low rates the oxidative deamination of L-2-aminobutyrate, and the reductive amination of 2-oxovalerate and 2-oxobutyrate. In Pyrobaculum calidifontis (strain DSM 21063 / JCM 11548 / VA1), this protein is NADP(+)-dependent glutamate dehydrogenase.